The primary structure comprises 201 residues: UPF0301 protein Avi_1069 (201 aa).

Belongs to the UPF0301 (AlgH) family.

The protein is UPF0301 protein Avi_1069 of Allorhizobium ampelinum (strain ATCC BAA-846 / DSM 112012 / S4) (Agrobacterium vitis (strain S4)).